Reading from the N-terminus, the 447-residue chain is Tektin-4 (447 aa).

Coiled coils occupy residues 322-348 (LRKT…DKEA) and 375-423 (FRLL…TNSL).

Belongs to the tektin family. In terms of assembly, microtubule inner protein component of sperm flagellar doublet microtubules. In terms of processing, ubiquitinated, leading to its degradation. Deubiquitinated by USP16, promoting its stability. In terms of tissue distribution, detected in testis, where it is weakly expressed in round spermatids, and strongly expressed in the flagellum of step 16 elongated spermatids (at protein level). Expressed in spermatozoa. In the sperm flagellum, localizes to the principal piece and midpiece (at protein level). Specifically expressed in testis; not detected in other tissues tested.

The protein localises to the cytoplasm. It localises to the cytoskeleton. Its subcellular location is the cilium axoneme. It is found in the flagellum axoneme. Microtubule inner protein (MIP) part of the dynein-decorated doublet microtubules (DMTs) in cilia and flagellar axoneme. Forms filamentous polymers in the walls of ciliary and flagellar microtubules. Contributes to normal sperm motility. The protein is Tektin-4 (Tekt4) of Mus musculus (Mouse).